The chain runs to 434 residues: Chaperone SurA (434 aa).

The N-terminal stretch at 1-22 (MKHSKKIVTALLALAMSQTVMA) is a signal peptide. PpiC domains are found at residues 173-274 (EVEF…KVMD) and 283-383 (VEEV…QLMD).

It is found in the periplasm. It carries out the reaction [protein]-peptidylproline (omega=180) = [protein]-peptidylproline (omega=0). Functionally, chaperone involved in the correct folding and assembly of outer membrane proteins. Recognizes specific patterns of aromatic residues and the orientation of their side chains, which are found more frequently in integral outer membrane proteins. May act in both early periplasmic and late outer membrane-associated steps of protein maturation. The sequence is that of Chaperone SurA from Shewanella denitrificans (strain OS217 / ATCC BAA-1090 / DSM 15013).